The following is a 512-amino-acid chain: DNA damage-binding protein CMR1 (512 aa).

Positions 32 to 96 (SQIKREAGVE…IPNVNDNQLL (65 aa)) are disordered. Residues 34 to 46 (IKREAGVEDEHLD) show a composition bias toward basic and acidic residues. The span at 47–60 (RKRKKKAGSAKKAV) shows a compositional bias: basic residues. WD repeat units lie at residues 189–230 (LTAE…PEDE), 241–281 (LFTK…SEEI), 289–329 (DDPL…TEIN), 333–373 (LSDK…NKPE), 390–429 (DSRLSVSAVSYSPMDETLVCNGYDDTIRLFDVSGTLPEDL), 442–481 (GRWTSILKARFKLNMDVFAIANMKRAIDIYTSSGVQLAHL), and 482–512 (PTATVPAVISWHPTQNWVVGGNSSGKAFLFT).

Belongs to the WD repeat DDB2/WDR76 family.

Functionally, DNA-binding protein that binds to both single- and double-stranded DNA. Binds preferentially to UV-damaged DNA. May be involved in DNA-metabolic processes. In Kluyveromyces lactis (strain ATCC 8585 / CBS 2359 / DSM 70799 / NBRC 1267 / NRRL Y-1140 / WM37) (Yeast), this protein is DNA damage-binding protein CMR1.